We begin with the raw amino-acid sequence, 2429 residues long: TGTPEPIAIVGMGCRFPGGANTPSKLWDLLCAKRDVQRRIPTDRFHVDAFYDRDGERAGCLNVREAYTLDEDIRQFDAAFFKTNALEAEAMDPQQRLLLETVYEALESAGGVMEDLHGSDTAVYVGVMTGDYHELLLRDPEDMPKYMATGTARSILSNRISYFFDWTGPSMTIDTACSSSLVAVHEAVQALRQGRSTLACAAGANLILGPEMMISESKLHMLSPTGRSRMWDAGADGYARGEGFAAVMLKTLSQAVADGDYVYGVIRETGVNSDGRTNGITLPGADSQTALIRQTYARAGLDIDSQRCQYFEAHGTGTAAGDPIEARAIYNAFFASSSEQAETPLYVGSVKTAVGHLEGTAGLAGLVKAVEAVRRGVIPPNMLFESLNPEIQPFYHRLAVPTDTIPWPEVREGEPRRASVNSFGFGGTNAHAIIESYDNPHRRPSSATSSLYTPLVLSANSESSLRGQVEALHAFLSTTDTPVQHILHTLQTRRSQHPVRATFSAPDRDTLSTALSKAVASDSTLGTRVDKRPAKPRILAVFTGQGAQWPTMGREILRASPLAQRTLSTLQSALDTLPDGPDWLLSTEILADKDTSRLASASVAQPLCTAVQILVVDLLRLAGITPSVVVGHSSGEIAAAYAAGMISAAEAIRIAYYRGVHASLARGQNGQRGGMMAVGMSYDEATEFCEENFAERIEVAASNAPSSVTLSGDEDAIAEAKAILDERGVFARPLRVDTAYHSAHMIPCSEPYLDSLAACEIAPQEAREGCVWVSSVHGARMEGYRVDTLTGEYWNDNMVSPVMFSTAVEMALSEEAACDVAIEIGAHPALKGPFTQTAKQVAAAASSATPLPYSGTLSRGQHDIEALSETLGYLWLHLGAKAVAFPAYTSAFTDALPQWVPDLPRYSWDHRQSFWRESTKSANFRSRLPRHPLLGVRSTEDLDQEMRWAITLRTQELPWLEGHKVEGQVIYPAAAYLVMAMEAAHNLVGEGLSVQMLELFDVEIANAIPLPEDGKGVEVQFTLVPSPGNAKSETKTAQWACYARTAGTGKSSWRSNARGTVRVVLGPAADEDLPPRNPPTGVFHEVKTERFYEALTAIGLHYTGPFRGLDSVHRRSGTAMATATQIPAAELGVPIHPAVLDAAFQTLFAAYCWPEDGSLRAPFVPTGLQSLRIVNRDLVQASAQLTVDAAITHSSGTTIIADLDLYSPAAAGLIQLQGLRCSSLTPPGPRDYKELYTQTAWEVDLSSGLAALSSVSDSDSPSNLALVDLSERLAYYYLRHLNTTIPRSAVPQMEWHHQRIFEWIDHLFPLVTSGKHPTIRPEWSTDTKPHLLALASQYPDSVDLQLIRAVGEHLPAVVRGEAWMLEHMVANDTLDRFYKFGLGFARANGYMGRVAGQIAHRYPRSRILEIGAGTGGATKGILEALDGRFERYTFTDISTGFFEAAATQFERWAGKMSYRALDVEKELSSQGWDGEEAGFDVIVASNVLHATKSLRKTMENVRRLLKPGGFLLLLEVTSEIVRVKLMMAGLPGWWLGGEDGRRYGPTITVEQWDTLLKETGFAGVDHVVNDFVDESKYMTSVMVTQAVDADVRLLREPLSAGWTLPPVTVVGGQKGLAGRVVEALGSAGSVQLVENLEGLFVQPDISVTSLVILEDFDHPVLEDFTPCKLEALQRALPECRQLLWVSGQCREKNPYGNMAIGLCRAIAAEQPHIQFQHLDIEDAVDAGAAKAVTEALVRLVFASQTRLATKNVLWTCEPELVRENGQWLVPRIVPDKRLNDQLNARKMVVQGMATSEEKLELVKQAERYVLSPALPSVVEKDGAVEVKVTHALVNAVQLDQGSVCVVSGNLLSKPDVQVIACTNSVRSVVTVSEEMVFPAENASPPLLQTVAFGLVADEWLHGLSSSDVLVLHQADEQLGRVLRSKAAEAGVKVVDVRTHAYASERSIRAQIPPSTKLLVDFAQSSVQWERILPAQCKIRSYGDAIAPGTSIADTANLNTSQLQRAISWAQQQQPADTALETIPAAELATTPTPSYHAILSFSPSTTIPTITRPVNPALLFRPDRTYLLVGCTGGLGQSLCRWMVLNGARHLALTTRNRTRISTTWLADLAQLGANVQLFEADVADMASLTAIHQTITTGMPPIAGIANAAMVLSDRSFGELKHTDFTTVFGPKVLGTKNLDTLFHSQKLDFFIMFSSLASIVGNRGQSNYVAANLFMSTVAAQRRARGLAASVFHIGMVLGVGYVSTTGVYETTLRQYKYMPIAEPEFWDMFAQAIVIGHPTLAGGHAPEMITGLHRHSLREEVAKAFWAENPRFSLHTLVEESQTVVVDAASAKQVPLAEAVAEAETLEEVDGVIQEAFVVKMERMLQAAKGSIERGQPLINLGVDSLIAVEIRSWFLKELEVDMPVLKLVGGMSVGELCREAASEVL.

The Ketosynthase family 3 (KS3) domain maps to Pro4 to Ser436. Residues Cys177, His314, and His356 each act as for beta-ketoacyl synthase activity in the active site. Positions Val541–Gln861 are malonyl-CoA:ACP transacylase (MAT) domain. The N-terminal hotdog fold stretch occupies residues His931 to Ala1068. The tract at residues His931–Pro1229 is dehydratase (DH) domain. In terms of domain architecture, PKS/mFAS DH spans His931–Arg1230. The active-site Proton acceptor; for dehydratase activity is His963. The C-terminal hotdog fold stretch occupies residues Val1082–Arg1230. Asp1141 serves as the catalytic Proton donor; for dehydratase activity. Positions Asn1388–Tyr1577 are methyltransferase (MT) domain. Positions Thr2065–His2235 are ketoreductase (KR) domain. Residues Glu2351 to Val2428 enclose the Carrier domain. Residue Ser2388 is modified to O-(pantetheine 4'-phosphoryl)serine.

It participates in secondary metabolite biosynthesis. Its function is as follows. Highly reducing polyketide synthase; part of the cluster that mediates the biosynthesis of acurin A, a highly reduced polyketide coupled to a serine via a peptide bond. The activities of the highly reducing polyketide synthase acrA and the nonribosomal peptide synthetase acrB are collectively responsible for the synthesis of the acurin A core structure with a heptaketide backbone produced by acrA covalently fused to a L-serine by acrB. After the formation of the PK-NRP hybrid product, it is detached from acrB by reductive release to set up the formation of the lactam ring by aldol condensation. The hydrolyase acrC then catalyzes water loss to generate a double bond in the ring. This double bond is probably reduced, which is followed by three oxidations at C-22 to generate the carboxylic acid moiety, involving probably the FAD-binding monooxygenase acrE and the cytochrome P450 monooxygenases acrD and acrF. Finally, a last methylation step performed by the O-methyltransferase acrG leads to the production of acurin A. In Aspergillus aculeatus (strain ATCC 16872 / CBS 172.66 / WB 5094), this protein is Highly reducing polyketide synthase acrA.